Reading from the N-terminus, the 450-residue chain is Tripartite motif-containing protein 77 (450 aa).

The segment at 15-56 adopts an RING-type zinc-finger fold; it reads CSICTDYLTDPVTICCGHRFCSPCLCLLWEDTLTPNCCPVCR. The B box-type zinc finger occupies 88–131; it reads SAMLICRRHQEIKNLICETDRSLLCFLCSQSPRHATHKHYMTRE. Positions 93, 96, 115, and 121 each coordinate Zn(2+). A B30.2/SPRY domain is found at 269–450; sequence QLSAWTITGV…LRPFICHGSK (182 aa).

Belongs to the TRIM/RBCC family.

This chain is Tripartite motif-containing protein 77 (TRIM77), found in Homo sapiens (Human).